The following is a 396-amino-acid chain: S-adenosylmethionine synthase (396 aa).

His16 contributes to the ATP binding site. Residue Asp18 coordinates Mg(2+). Residue Glu44 coordinates K(+). L-methionine contacts are provided by Glu57 and Gln100. Residues 100 to 110 (QSQDIARGVDN) are flexible loop. ATP is bound by residues 162–164 (DGK), 228–229 (RF), Asp237, 243–244 (RK), Ala260, and Lys264. L-methionine is bound at residue Asp237. Position 268 (Lys268) interacts with L-methionine.

It belongs to the AdoMet synthase family. In terms of assembly, homotetramer; dimer of dimers. Mg(2+) serves as cofactor. K(+) is required as a cofactor.

The protein localises to the cytoplasm. The enzyme catalyses L-methionine + ATP + H2O = S-adenosyl-L-methionine + phosphate + diphosphate. It participates in amino-acid biosynthesis; S-adenosyl-L-methionine biosynthesis; S-adenosyl-L-methionine from L-methionine: step 1/1. Catalyzes the formation of S-adenosylmethionine (AdoMet) from methionine and ATP. The overall synthetic reaction is composed of two sequential steps, AdoMet formation and the subsequent tripolyphosphate hydrolysis which occurs prior to release of AdoMet from the enzyme. The chain is S-adenosylmethionine synthase from Myxococcus xanthus (strain DK1622).